Reading from the N-terminus, the 82-residue chain is MVTIRLARHGAKKRPFYQIVVADSRNAATGRFIEKVGFFNPTAKGQEEGLRLDLDRVNHWVGQGASVSDRVAKLVKDAQKAA.

This sequence belongs to the bacterial ribosomal protein bS16 family.

This Vibrio parahaemolyticus serotype O3:K6 (strain RIMD 2210633) protein is Small ribosomal subunit protein bS16.